Reading from the N-terminus, the 327-residue chain is Thiosulfate dehydrogenase (327 aa).

A signal peptide spans 1–26 (MKIIPYRKRSVLIATIFAISAVGITG). The segment covering 66 to 78 (NDMTATAGGTDTA) has biased composition (low complexity). A disordered region spans residues 66 to 93 (NDMTATAGGTDTASGKPTIKMPDESTIP). Cytochrome c domains follow at residues 99–196 (AAVR…SWLS) and 219–305 (PNTD…THLP). Residues cysteine 125, cysteine 128, histidine 129, cysteine 232, cysteine 235, and histidine 236 each coordinate heme c.

As to quaternary structure, monomer. Binds 2 heme c groups covalently per subunit.

The protein localises to the periplasm. It carries out the reaction 2 thiosulfate + 2 Fe(III)-[cytochrome c] = tetrathionate + 2 Fe(II)-[cytochrome c] + 2 H(+). Catalyzes the oxidation of 2 molecules of thiosulfate to tetrathionate. This Psychrobacter arcticus (strain DSM 17307 / VKM B-2377 / 273-4) protein is Thiosulfate dehydrogenase (tsdA).